The primary structure comprises 385 residues: Acetoin utilization protein AcuC (385 aa).

It belongs to the histone deacetylase family.

The protein operates within ketone degradation; acetoin degradation. Role in growth on acetoin or butanediol. Involved in the breakdown of these compounds used as a carbon source. The polypeptide is Acetoin utilization protein AcuC (acuC) (Staphylococcus xylosus).